Here is a 317-residue protein sequence, read N- to C-terminus: Methionyl-tRNA formyltransferase (317 aa).

111-114 (SLLP) contributes to the (6S)-5,6,7,8-tetrahydrofolate binding site.

This sequence belongs to the Fmt family.

It catalyses the reaction L-methionyl-tRNA(fMet) + (6R)-10-formyltetrahydrofolate = N-formyl-L-methionyl-tRNA(fMet) + (6S)-5,6,7,8-tetrahydrofolate + H(+). Its function is as follows. Attaches a formyl group to the free amino group of methionyl-tRNA(fMet). The formyl group appears to play a dual role in the initiator identity of N-formylmethionyl-tRNA by promoting its recognition by IF2 and preventing the misappropriation of this tRNA by the elongation apparatus. This chain is Methionyl-tRNA formyltransferase, found in Chlorobium phaeobacteroides (strain BS1).